The primary structure comprises 367 residues: UDP-N-acetylglucosamine--N-acetylmuramyl-(pentapeptide) pyrophosphoryl-undecaprenol N-acetylglucosamine transferase (367 aa).

Residues 15–17 (TGG), Asn127, Arg163, Ser191, Ile249, and Gln294 contribute to the UDP-N-acetyl-alpha-D-glucosamine site.

This sequence belongs to the glycosyltransferase 28 family. MurG subfamily.

Its subcellular location is the cell inner membrane. The catalysed reaction is di-trans,octa-cis-undecaprenyl diphospho-N-acetyl-alpha-D-muramoyl-L-alanyl-D-glutamyl-meso-2,6-diaminopimeloyl-D-alanyl-D-alanine + UDP-N-acetyl-alpha-D-glucosamine = di-trans,octa-cis-undecaprenyl diphospho-[N-acetyl-alpha-D-glucosaminyl-(1-&gt;4)]-N-acetyl-alpha-D-muramoyl-L-alanyl-D-glutamyl-meso-2,6-diaminopimeloyl-D-alanyl-D-alanine + UDP + H(+). It participates in cell wall biogenesis; peptidoglycan biosynthesis. Its function is as follows. Cell wall formation. Catalyzes the transfer of a GlcNAc subunit on undecaprenyl-pyrophosphoryl-MurNAc-pentapeptide (lipid intermediate I) to form undecaprenyl-pyrophosphoryl-MurNAc-(pentapeptide)GlcNAc (lipid intermediate II). The sequence is that of UDP-N-acetylglucosamine--N-acetylmuramyl-(pentapeptide) pyrophosphoryl-undecaprenol N-acetylglucosamine transferase from Burkholderia multivorans (strain ATCC 17616 / 249).